A 700-amino-acid chain; its full sequence is Polyribonucleotide nucleotidyltransferase (700 aa).

The Mg(2+) site is built by Asp-484 and Asp-490. The 60-residue stretch at 551-610 (PRVIRMVVDPEKIREIIGPGGKTISKIIAETGVKIDIEEDGRLYITASDLRSGERAKQMI) folds into the KH domain. An S1 motif domain is found at 620-688 (GEIYLGKVLR…KLGRISLSRK (69 aa)).

It belongs to the polyribonucleotide nucleotidyltransferase family. Mg(2+) serves as cofactor.

It localises to the cytoplasm. It carries out the reaction RNA(n+1) + phosphate = RNA(n) + a ribonucleoside 5'-diphosphate. Functionally, involved in mRNA degradation. Catalyzes the phosphorolysis of single-stranded polyribonucleotides processively in the 3'- to 5'-direction. This Thermoanaerobacter pseudethanolicus (strain ATCC 33223 / 39E) (Clostridium thermohydrosulfuricum) protein is Polyribonucleotide nucleotidyltransferase.